The primary structure comprises 335 residues: HTH-type transcriptional regulator MalR (335 aa).

The HTH lacI-type domain occupies 1-55 (MNIKDIARLSGVGVSTVSRVINNHPDVKQSTREKVLQIIKDSNYIPNNSARILKQ). The segment at residues 3 to 22 (IKDIARLSGVGVSTVSRVIN) is a DNA-binding region (H-T-H motif).

Functionally, repressor of glucanotransferase gene expression. This Clostridium butyricum protein is HTH-type transcriptional regulator MalR.